A 426-amino-acid polypeptide reads, in one-letter code: Tyrosine--tRNA ligase (426 aa).

Residue Tyr38 participates in L-tyrosine binding. Residues 43–52 (PTADSLHIGS) carry the 'HIGH' region motif. 2 residues coordinate L-tyrosine: Tyr176 and Gln180. The 'KMSKS' region signature appears at 236–240 (KFGKT). Lys239 is a binding site for ATP. Residues 359 to 426 (QTIVEVLTQS…KKLFNLYIWK (68 aa)) form the S4 RNA-binding domain.

This sequence belongs to the class-I aminoacyl-tRNA synthetase family. TyrS type 1 subfamily. As to quaternary structure, homodimer.

It localises to the cytoplasm. It catalyses the reaction tRNA(Tyr) + L-tyrosine + ATP = L-tyrosyl-tRNA(Tyr) + AMP + diphosphate + H(+). Its function is as follows. Catalyzes the attachment of tyrosine to tRNA(Tyr) in a two-step reaction: tyrosine is first activated by ATP to form Tyr-AMP and then transferred to the acceptor end of tRNA(Tyr). The protein is Tyrosine--tRNA ligase of Aliivibrio salmonicida (strain LFI1238) (Vibrio salmonicida (strain LFI1238)).